Here is a 178-residue protein sequence, read N- to C-terminus: Large ribosomal subunit protein uL6 (178 aa).

The protein belongs to the universal ribosomal protein uL6 family. Part of the 50S ribosomal subunit.

Functionally, this protein binds to the 23S rRNA, and is important in its secondary structure. It is located near the subunit interface in the base of the L7/L12 stalk, and near the tRNA binding site of the peptidyltransferase center. This Streptococcus pneumoniae (strain JJA) protein is Large ribosomal subunit protein uL6.